Here is a 372-residue protein sequence, read N- to C-terminus: Protein RecA (372 aa).

77–84 is an ATP binding site; that stretch reads GPESSGKT.

This sequence belongs to the RecA family.

It is found in the cytoplasm. Its function is as follows. Can catalyze the hydrolysis of ATP in the presence of single-stranded DNA, the ATP-dependent uptake of single-stranded DNA by duplex DNA, and the ATP-dependent hybridization of homologous single-stranded DNAs. It interacts with LexA causing its activation and leading to its autocatalytic cleavage. The sequence is that of Protein RecA from Corynebacterium diphtheriae (strain ATCC 700971 / NCTC 13129 / Biotype gravis).